A 594-amino-acid polypeptide reads, in one-letter code: Parathyroid hormone/parathyroid hormone-related peptide receptor (594 aa).

Positions 1–28 (MGTARIAPGLALLLCCPVLSSAYALVDA) are cleaved as a signal peptide. Over 29–188 (DDVMTKEEQI…TREREVFDRL (160 aa)) the chain is Extracellular. 3 cysteine pairs are disulfide-bonded: C48-C117, C108-C149, and C132-C171. The segment at 66 to 102 (DKGWTSASTSGKPRKDKASGKLYPESEEDKEAPTDSR) is disordered. N-linked (GlcNAc...) asparagine glycosylation is found at N152, N162, N167, and N177. The helical transmembrane segment at 189–209 (GMIYTVGYSMSLASLTVAVLI) threads the bilayer. The Cytoplasmic portion of the chain corresponds to 210 to 223 (LAYFRRLHCTRNYI). Residues 224–244 (HMHLFLSFMLRAVSIFVKDAV) form a helical membrane-spanning segment. At 245-295 (LYSGATLDEAERLTEEELRAIAQAPPPPATAAAGYAGCRVAVTFFLYFLAT) the chain is on the extracellular side. The helical transmembrane segment at 296–316 (NYYWILVEGLYLHSLIFMAFF) threads the bilayer. Residues 317-319 (SEK) lie on the Cytoplasmic side of the membrane. The chain crosses the membrane as a helical span at residues 320-340 (KYLWGFTVFGWGLPAVFVAVW). The Extracellular portion of the chain corresponds to 341–361 (VSVRATLANTGCWDLSSGNKK). Residues 362 to 382 (WIIQVPILASIVLHFILFINI) traverse the membrane as a helical segment. Over 383 to 405 (VRVLATKLRETNAGRCDTRQQYR) the chain is Cytoplasmic. A helical membrane pass occupies residues 406-426 (KLLKSTLVLMPLFGVHYIVFM). Residues 427–440 (ATPYTEVSGTLWQV) are Extracellular-facing. A helical membrane pass occupies residues 441–461 (QMHYEMLFNSFQGFFVAIIYC). Residues 462–594 (FCNGEVQAEI…LLQEEWETVM (133 aa)) lie on the Cytoplasmic side of the membrane. The Important for interaction with G proteins signature appears at 475 to 478 (WSRW). The tract at residues 525–594 (PTATTNGHPQ…LLQEEWETVM (70 aa)) is disordered. Over residues 543–558 (TPALETLETTPPATAA) the composition is skewed to low complexity. T552 bears the Phosphothreonine mark.

This sequence belongs to the G-protein coupled receptor 2 family. As to quaternary structure, homodimer in the absence of bound ligand. Peptide hormone binding leads to dissociation of the homodimer. N-glycosylated.

Its subcellular location is the cell membrane. In terms of biological role, G-protein-coupled receptor for parathyroid hormone (PTH) and for parathyroid hormone-related peptide (PTHLH). Ligand binding causes a conformation change that triggers signaling via guanine nucleotide-binding proteins (G proteins) and modulates the activity of downstream effectors, such as adenylate cyclase (cAMP). PTH1R is coupled to G(s) G alpha proteins and mediates activation of adenylate cyclase activity. PTHLH dissociates from PTH1R more rapidly than PTH; as consequence, the cAMP response induced by PTHLH decays faster than the response induced by PTH. In Pongo abelii (Sumatran orangutan), this protein is Parathyroid hormone/parathyroid hormone-related peptide receptor (PTH1R).